Reading from the N-terminus, the 405-residue chain is Acetylornithine aminotransferase 2 (405 aa).

Pyridoxal 5'-phosphate contacts are provided by residues 105 to 106 and Phe138; that span reads GT. N(2)-acetyl-L-ornithine is bound at residue Arg141. Residue 224 to 227 participates in pyridoxal 5'-phosphate binding; that stretch reads DEVQ. Position 254 is an N6-(pyridoxal phosphate)lysine (Lys254). Ser282 contacts N(2)-acetyl-L-ornithine. Thr283 contributes to the pyridoxal 5'-phosphate binding site.

This sequence belongs to the class-III pyridoxal-phosphate-dependent aminotransferase family. ArgD subfamily. As to quaternary structure, homodimer. Requires pyridoxal 5'-phosphate as cofactor.

It is found in the cytoplasm. The enzyme catalyses N(2)-acetyl-L-ornithine + 2-oxoglutarate = N-acetyl-L-glutamate 5-semialdehyde + L-glutamate. The protein operates within amino-acid biosynthesis; L-arginine biosynthesis; N(2)-acetyl-L-ornithine from L-glutamate: step 4/4. The protein is Acetylornithine aminotransferase 2 of Caulobacter vibrioides (strain ATCC 19089 / CIP 103742 / CB 15) (Caulobacter crescentus).